The chain runs to 288 residues: Serine/threonine-protein acetyltransferase YopJ (288 aa).

Active-site residues include His109 and Glu128. His109 is a binding site for CoA. 167–168 (RS) lines the CoA pocket. Cys172 is an active-site residue. 1D-myo-inositol hexakisphosphate contacts are provided by residues 182–185 (KLYI) and 224–225 (KH). 227 to 230 (QGKK) serves as a coordination point for CoA. Position 257 (Arg257) interacts with 1D-myo-inositol hexakisphosphate. 266-270 (DGKEL) is a binding site for CoA.

This sequence belongs to the acetyltransferase YopJ family. 1D-myo-inositol hexakisphosphate is required as a cofactor.

The protein localises to the secreted. It carries out the reaction L-threonyl-[protein] + acetyl-CoA = O-acetyl-L-threonyl-[protein] + CoA. The catalysed reaction is L-seryl-[protein] + acetyl-CoA = O-acetyl-L-seryl-[protein] + CoA. 1D-myo-inositol hexakisphosphate activates protein-acetyltransferase activity via an allosteric mechanism: 1D-myo-inositol hexakisphosphate-binding induces a conformational rearrangement that stimulates the interaction with acetyl-CoA. Functionally, serine/threonine-protein acetyltransferase translocated into infected cells, which inhibits the host immune response and induces cell death by mediating acetylation of target proteins. Inhibits the MAPK and NF-kappa-B signaling pathways by acetylating protein-kinases such as MAP2K1, MAP2K6, MAP3K7/TAK1 and I-kappa-B kinase (CHUK/IKKA and IKBKB) on serine and threonine residues critical for their activation by phosphorylation, thereby preventing protein-kinase activation. Promotes pyroptosis, a programmed cell death, in host cells by mediating acetylation of MAP3K7/TAK1: MAP3K7/TAK1 inactivation triggers activation of caspase-8 (CASP8), followed by CASP8-dependent cleavage of gasdermin-D (GSDMD) and induction of pyroptosis. Also able to induce intestinal barrier dysfunction by acetylating and inhibiting host protein-kinases RIPK2/RICK and MAP3K7/TAK1, thereby promoting cell death. The sequence is that of Serine/threonine-protein acetyltransferase YopJ from Yersinia pseudotuberculosis serotype I (strain IP32953).